Consider the following 1654-residue polypeptide: Outer membrane protein B (1654 aa).

A propeptide spanning residues 1334-1361 is cleaved from the precursor; the sequence is GALRYLGTPETAEMAGPEAGAISAAVAA. Positions 1366-1654 constitute an Autotransporter domain; sequence IDNVAYGIWA…QGTLKVRVNF (289 aa).

This sequence belongs to the rickettsiae OmpA/OmpB family. In terms of processing, the N-terminus is blocked.

Its subcellular location is the periplasm. The protein localises to the secreted. It localises to the cell surface. The protein resides in the cell outer membrane. The 120 kDa surface-exposed protein is a major structural protein which may play a role as a rickettsial virulence factor and/or immunogen during infection. Functionally, the 32 kDa beta peptide may serve as a membrane anchor. This is Outer membrane protein B (ompB) from Rickettsia rickettsii.